We begin with the raw amino-acid sequence, 328 residues long: MTKEVLIHQIIDVLSRAGFALSDRCNIRPRSFDVAARKDETLLLCKVLFNIDGLNEETAREMKYLAEYLGGSAIVVGAKTRDQMLEDSVVYMRYDILALNVQTLYDYFVENIKPLVSAAPGGLYISIEGDLLKKARTDQSMSLGTLASMVGVSRRTISKYEEEGMDASIDVVLQLEDIFGVELARPIDILKSCGSRKPRKKAEPEKEDPQVKHNALLPEDLILNTISMLGYDVLPTAQAPFKAISRDKSSVILTGVSEFNTTVVKRAHLMSSISCITETQSVFIINGRSKLKSVENTALIEKKELDKISDSQELLEFIEERKDTNSGA.

The HTH cro/C1-type domain maps to 132-190; that stretch reads LKKARTDQSMSLGTLASMVGVSRRTISKYEEEGMDASIDVVLQLEDIFGVELARPIDIL. Residues 143-162 constitute a DNA-binding region (H-T-H motif); that stretch reads LGTLASMVGVSRRTISKYEE.

This is Putative HTH-type transcriptional regulatory protein MA_3524 from Methanosarcina acetivorans (strain ATCC 35395 / DSM 2834 / JCM 12185 / C2A).